A 355-amino-acid chain; its full sequence is Serine endoprotease DegS (355 aa).

Residues 1–4 (MFVK) lie on the Cytoplasmic side of the membrane. The helical transmembrane segment at 5–27 (LLRSVAIGLIVGAILLVAMPSLR) threads the bilayer. Residues 28–355 (SLNPLSTPQF…VTIQEYPATN (328 aa)) are Periplasmic-facing. Catalysis depends on charge relay system residues histidine 96 and aspartate 126. Residue threonine 184 participates in substrate binding. The Charge relay system role is filled by serine 201. Residue 259 to 264 (IGIGGR) participates in substrate binding. The 46-residue stretch at 281-326 (GIVVNEVSPDGPAANAGIQVNDLIISVDNKPAISALETMDQVAEIR) folds into the PDZ domain. Tyrosine 351 contacts substrate.

It belongs to the peptidase S1C family. As to quaternary structure, homotrimer.

Its subcellular location is the cell inner membrane. The enzyme catalyses Acts on substrates that are at least partially unfolded. The cleavage site P1 residue is normally between a pair of hydrophobic residues, such as Val-|-Val.. Allosterically activated by the C-terminus of exposed OMP peptides (consensus Tyr-X-Phe-COOH); cleavage only occurs in the presence of peptides. Inhibited when RseB is bound to RseA. Its function is as follows. A site-1 protease (S1P) that cleaves the peptide bond between 'Val-148' and 'Ser-149' in RseA. Part of a regulated intramembrane proteolysis (RIP) cascade. When heat shock or other environmental stresses disrupt protein folding in the periplasm, DegS senses the accumulation of unassembled outer membrane porins (OMP) and then initiates RseA (anti sigma-E factor) degradation by cleaving its periplasmic domain, making it a substrate for subsequent cleavage by RseP. This cascade ultimately leads to the sigma-E-driven expression of a variety of factors dealing with folding stress in the periplasm and OMP assembly. Required for basal and stress-induced degradation of RseA. The polypeptide is Serine endoprotease DegS (degS) (Escherichia coli O157:H7).